Here is a 102-residue protein sequence, read N- to C-terminus: MKAMKATKKAMTKTGLAEALAPKPSSARRIAPPSSRAWPPSAQEVKKTGKLIIPGLVMVKTRKKPATKAGKREMFGKVVLVKAQPAKTVVKAYPVKALKDNF.

Over residues 1–11 (MKAMKATKKAM) the composition is skewed to basic residues. Positions 1–43 (MKAMKATKKAMTKTGLAEALAPKPSSARRIAPPSSRAWPPSAQ) are disordered. Residues 21-42 (APKPSSARRIAPPSSRAWPPSA) show a composition bias toward low complexity.

The protein resides in the nucleus. This is Major basic nuclear protein 2 (HCc2) from Crypthecodinium cohnii (Dinoflagellate).